The sequence spans 154 residues: Probable cyclic pyranopterin monophosphate synthase (154 aa).

Substrate contacts are provided by residues 74–76 and 110–111; these read LCH and ME. Asp-125 is an active-site residue.

This sequence belongs to the MoaC family. In terms of assembly, homohexamer; trimer of dimers.

It carries out the reaction (8S)-3',8-cyclo-7,8-dihydroguanosine 5'-triphosphate = cyclic pyranopterin phosphate + diphosphate. The protein operates within cofactor biosynthesis; molybdopterin biosynthesis. In terms of biological role, catalyzes the conversion of (8S)-3',8-cyclo-7,8-dihydroguanosine 5'-triphosphate to cyclic pyranopterin monophosphate (cPMP). In Methanosphaerula palustris (strain ATCC BAA-1556 / DSM 19958 / E1-9c), this protein is Probable cyclic pyranopterin monophosphate synthase.